A 307-amino-acid polypeptide reads, in one-letter code: Acetyl-coenzyme A carboxylase carboxyl transferase subunit beta (307 aa).

The interval 1–26 (MAMAEPQDPKKGDKKTAERRGGGWLS) is disordered. Residues 7 to 21 (QDPKKGDKKTAERRG) are compositionally biased toward basic and acidic residues. Residues 45 to 307 (LWVKCPDTGE…LMMGRKRQAA (263 aa)) enclose the CoA carboxyltransferase N-terminal domain.

Belongs to the AccD/PCCB family. As to quaternary structure, acetyl-CoA carboxylase is a heterohexamer composed of biotin carboxyl carrier protein (AccB), biotin carboxylase (AccC) and two subunits each of ACCase subunit alpha (AccA) and ACCase subunit beta (AccD).

The protein resides in the cytoplasm. The catalysed reaction is N(6)-carboxybiotinyl-L-lysyl-[protein] + acetyl-CoA = N(6)-biotinyl-L-lysyl-[protein] + malonyl-CoA. The protein operates within lipid metabolism; malonyl-CoA biosynthesis; malonyl-CoA from acetyl-CoA: step 1/1. In terms of biological role, component of the acetyl coenzyme A carboxylase (ACC) complex. Biotin carboxylase (BC) catalyzes the carboxylation of biotin on its carrier protein (BCCP) and then the CO(2) group is transferred by the transcarboxylase to acetyl-CoA to form malonyl-CoA. This is Acetyl-coenzyme A carboxylase carboxyl transferase subunit beta from Caulobacter vibrioides (strain ATCC 19089 / CIP 103742 / CB 15) (Caulobacter crescentus).